Reading from the N-terminus, the 456-residue chain is MFKTLYTRIAIYTITVILFSALVSFLFANVYYHFNLKAHNDAKIMRTLKEARAFHTSSNQSDTQSYFKHLGDMNYQIMIVDHSYHKTFFGEPFRKDTISDSAINQVLKGKAYHGIKNKPFELFITGFFDNETDNTVGIPFNQNNQKLAVFMRPDIGETFSEFRTFLAVLLICLLGISITLVIASTYSIIKPIKILKQATERLMHGDFNSPIYQSRHDEIGTLQYRFEAMRQSLKQVDDMRQHFVQNVSHEIKTPLTHIHRLLSTLQSNVNQGERDQIIHEIHEEVTHLSNLTKELLLLSELDNATHLKFEDDVHFKELITDIIRHEQYGIDNKQLMLMSDIDTVHFRGNNRLLHQACSNLIQNAIKYSNPNSMIDVNLFNNEGTIYFTVTNEGHTIPESVQPHLFDRFYKRNAEDNSNGLGLAITQSIIHLHRGQISVTSNDRDGTTFTVTLPETN.

2 helical membrane passes run 9–29 (IAIY…LFAN) and 164–184 (TFLA…VIAS). Positions 186–238 (YSIIKPIKILKQATERLMHGDFNSPIYQSRHDEIGTLQYRFEAMRQSLKQVDD) constitute an HAMP domain. A Histidine kinase domain is found at 246-456 (NVSHEIKTPL…TFTVTLPETN (211 aa)). A Phosphohistidine; by autocatalysis modification is found at His-249.

Post-translationally, autophosphorylated.

It localises to the cell membrane. The catalysed reaction is ATP + protein L-histidine = ADP + protein N-phospho-L-histidine.. Its function is as follows. Member of the two-component regulatory system HssS/HssR involved in intracellular heme homeostasis and tempering of staphylococcal virulence. HssS functions as a heme sensor histidine kinase which is autophosphorylated at a histidine residue and transfers its phosphate group to an aspartate residue of HssR. HssR/HssS activates the expression of hrtAB, an efflux pump, in response to extracellular heme, hemin, hemoglobin or blood. In Staphylococcus haemolyticus (strain JCSC1435), this protein is Heme sensor protein HssS (hssS).